Reading from the N-terminus, the 244-residue chain is AA9 family lytic polysaccharide monooxygenase B (244 aa).

The signal sequence occupies residues 1–19 (MFLVPLLAALSLSAPKVAA). Residue His20 participates in Cu(2+) binding. Tyr39 provides a ligand contact to (1,4-beta-D-glucosyl)n. 2 cysteine pairs are disulfide-bonded: Cys68-Cys189 and Cys111-Cys115. His99 is a binding site for Cu(2+). Asn152 carries N-linked (GlcNAc...) asparagine glycosylation. O2 is bound by residues His178 and Gln184. Tyr186 lines the Cu(2+) pocket. (1,4-beta-D-glucosyl)n contacts are provided by Asp224, Tyr226, and Glu229. The N-linked (GlcNAc...) asparagine glycan is linked to Asn233.

Belongs to the polysaccharide monooxygenase AA9 family. Cu(2+) is required as a cofactor.

The protein localises to the secreted. It catalyses the reaction [(1-&gt;4)-beta-D-glucosyl]n+m + reduced acceptor + O2 = 4-dehydro-beta-D-glucosyl-[(1-&gt;4)-beta-D-glucosyl]n-1 + [(1-&gt;4)-beta-D-glucosyl]m + acceptor + H2O.. In terms of biological role, lytic polysaccharide monooxygenase (LPMO) that depolymerizes crystalline and amorphous polysaccharides via the oxidation of scissile alpha- or beta-(1-4)-glycosidic bonds, yielding specifically C1 oxidation product. Catalysis by LPMOs requires the reduction of the active-site copper from Cu(II) to Cu(I) by a reducing agent and H(2)O(2) or O(2) as a cosubstrate. Displays catalytic activity on insoluble cellulose using I-beta microfibril model substrate. The protein is AA9 family lytic polysaccharide monooxygenase B of Heterobasidion irregulare (strain TC 32-1).